The chain runs to 151 residues: UPF0178 protein Desal_2673 (151 aa).

Belongs to the UPF0178 family.

This is UPF0178 protein Desal_2673 from Maridesulfovibrio salexigens (strain ATCC 14822 / DSM 2638 / NCIMB 8403 / VKM B-1763) (Desulfovibrio salexigens).